Here is a 372-residue protein sequence, read N- to C-terminus: Peptidyl-prolyl cis-trans isomerase D (372 aa).

Residues 10–173 (FFDIQIGQQQ…TDVTIAECGE (164 aa)) form the PPIase cyclophilin-type domain. The tract at residues 174–193 (LTGEDYDNADKQTPDATGDP) is disordered. TPR repeat units lie at residues 215-248 (ASELKNFGNTAFKNGNIALGLEKYQKGLRYLNEF), 268-304 (FTLHSNSSLLANKLGQFKNGKTWATYALDVADAASAK), and 309-342 (AKVYYRRAVAESGLKEEDEALKDLEQASTLAPSD).

The protein belongs to the cyclophilin-type PPIase family. PPIase D subfamily.

The protein resides in the cytoplasm. It catalyses the reaction [protein]-peptidylproline (omega=180) = [protein]-peptidylproline (omega=0). Its function is as follows. PPIases accelerate the folding of proteins. It catalyzes the cis-trans isomerization of proline imidic peptide bonds in oligopeptides. The sequence is that of Peptidyl-prolyl cis-trans isomerase D (cpr6) from Emericella nidulans (strain FGSC A4 / ATCC 38163 / CBS 112.46 / NRRL 194 / M139) (Aspergillus nidulans).